The primary structure comprises 819 residues: DNA mismatch repair protein MutS (819 aa).

Position 596-603 (596-603) interacts with ATP; that stretch reads GPNMSGKS.

Belongs to the DNA mismatch repair MutS family.

Functionally, this protein is involved in the repair of mismatches in DNA. It is possible that it carries out the mismatch recognition step. This protein has a weak ATPase activity. The protein is DNA mismatch repair protein MutS of Thermosipho melanesiensis (strain DSM 12029 / CIP 104789 / BI429).